Here is a 183-residue protein sequence, read N- to C-terminus: Probable RNA 2'-phosphotransferase (183 aa).

It belongs to the KptA/TPT1 family.

Removes the 2'-phosphate from RNA via an intermediate in which the phosphate is ADP-ribosylated by NAD followed by a presumed transesterification to release the RNA and generate ADP-ribose 1''-2''-cyclic phosphate (APPR&gt;P). May function as an ADP-ribosylase. The polypeptide is Probable RNA 2'-phosphotransferase (Pyrococcus furiosus (strain ATCC 43587 / DSM 3638 / JCM 8422 / Vc1)).